A 363-amino-acid polypeptide reads, in one-letter code: Adenosine 3'-phospho 5'-phosphosulfate transporter 2 (363 aa).

10 consecutive transmembrane segments (helical) span residues 39–59, 63–83, 106–126, 131–151, 157–177, 187–206, 231–251, 257–277, 281–301, and 310–330; these read WLQF…YGYM, IFKL…QFVI, IYGV…ASVG, PTQV…GILI, GWID…FTLA, SRGY…IGNI, VFIF…PFFL, TFGY…VVLT, VFGA…TIIL, and FTIE…LNLY.

Belongs to the nucleotide-sugar transporter family. SLC35B subfamily.

The protein localises to the golgi apparatus membrane. In terms of biological role, mediates the transport of adenosine 3'-phospho 5'-phosphosulfate (PAPS), from cytosol into Golgi. PAPS is a universal sulfuryl donor for sulfation events that take place in the Golgi. This chain is Adenosine 3'-phospho 5'-phosphosulfate transporter 2 (pst-2), found in Caenorhabditis briggsae.